The primary structure comprises 406 residues: Peptide transporter imqD (406 aa).

A disordered region spans residues 1–25 (MTAPADSTEKSETSETTTLQTTEVS). Over residues 14–25 (SETTTLQTTEVS) the composition is skewed to low complexity. 6 consecutive transmembrane segments (helical) span residues 184–204 (GLVACRVILGFILFFTCLSQA), 220–240 (IPNDTITAMNPIFCVIMGPVI), 262–282 (ATGFIMMSASMAFAAGVQKII), 309–329 (VFLQTPTYIILAVAEIFSFVT), 344–364 (AVVQALGQLGAAAGSAIGIAI), and 373–393 (LIWMYTGLAVAMFLVAVVFWI).

This sequence belongs to the major facilitator superfamily. Proton-dependent oligopeptide transporter (POT/PTR) (TC 2.A.17) family.

The protein resides in the membrane. Peptide transporter; part of the gene cluster that mediates the biosynthesis of imizoquins A to D, tripeptide-derived alkaloids that serve a protective role against oxidative stress that are essential for normal germination. This chain is Peptide transporter imqD, found in Aspergillus flavus (strain ATCC 200026 / FGSC A1120 / IAM 13836 / NRRL 3357 / JCM 12722 / SRRC 167).